Consider the following 360-residue polypeptide: GTPase Obg (360 aa).

In terms of domain architecture, Obg spans 1-156; the sequence is MFVDSVEIII…KCVRLELKLI (156 aa). Residues 157–360 form the OBG-type G domain; that stretch reads ADIGLVGFPN…LKFVLLKALP (204 aa). GTP is bound by residues 163–170, 188–192, 210–213, 279–282, and 341–343; these read GFPNAGKS, FTTLV, DIPG, NKCD, and SAV. Residues serine 170 and threonine 190 each contribute to the Mg(2+) site.

It belongs to the TRAFAC class OBG-HflX-like GTPase superfamily. OBG GTPase family. Monomer. Mg(2+) is required as a cofactor.

The protein resides in the cytoplasm. In terms of biological role, an essential GTPase which binds GTP, GDP and possibly (p)ppGpp with moderate affinity, with high nucleotide exchange rates and a fairly low GTP hydrolysis rate. Plays a role in control of the cell cycle, stress response, ribosome biogenesis and in those bacteria that undergo differentiation, in morphogenesis control. The chain is GTPase Obg from Helicobacter pylori (strain G27).